Reading from the N-terminus, the 330-residue chain is Pre-mRNA-splicing factor 38 (330 aa).

Residues 182–330 (SVLDEDLDDE…SRGERDRRRY (149 aa)) are disordered. Acidic residues predominate over residues 184 to 199 (LDEDLDDELPSDEEKA). Over residues 213–224 (RRPRRVRSKSRS) the composition is skewed to basic residues. Residues 240 to 330 (RSRDYYDELE…SRGERDRRRY (91 aa)) show a composition bias toward basic and acidic residues.

Belongs to the PRP38 family. In terms of assembly, component of the spliceosome C complex. Interacts with Mfap1 (via C-terminus). As to expression, detected in all germal and follicle cells.

The protein localises to the nucleus. Functionally, required for pre-mRNA splicing. The chain is Pre-mRNA-splicing factor 38 from Drosophila melanogaster (Fruit fly).